The chain runs to 74 residues: DNA gyrase inhibitor YacG (74 aa).

Cys7, Cys10, Cys26, and Cys30 together coordinate Zn(2+).

The protein belongs to the DNA gyrase inhibitor YacG family. As to quaternary structure, interacts with GyrB. Zn(2+) is required as a cofactor.

Its function is as follows. Inhibits all the catalytic activities of DNA gyrase by preventing its interaction with DNA. Acts by binding directly to the C-terminal domain of GyrB, which probably disrupts DNA binding by the gyrase. The sequence is that of DNA gyrase inhibitor YacG from Shewanella denitrificans (strain OS217 / ATCC BAA-1090 / DSM 15013).